Consider the following 130-residue polypeptide: Small ribosomal subunit protein uS9 (130 aa).

This sequence belongs to the universal ribosomal protein uS9 family.

In Shewanella loihica (strain ATCC BAA-1088 / PV-4), this protein is Small ribosomal subunit protein uS9.